A 678-amino-acid chain; its full sequence is MEQIEQHILRLRKQLRHWEYLYYVEAAPEVPDSEYDRFMAELRTLEAERPDLLTADSPSQRVGGQAQSSFGQVRHEVPMLSLDNVFEEPGFLAFDKRVRDRLKRDDDMTYCCELKLDGLAVSLLYENGELVRAATRGDGATGEDITANVRTIRTIPLRLQDHDNLPRLLEIRGEVFMSEAGFLRLNETAKREGSKVFANPRNAAAGSLRQLDPSITARRPLTFYCYGVGLLEDGELPESHWERLQQFKAWGVPVSDRVRRCTGSAAVLDFYRQVHEARLSLGFDIDGVVIKVDSLALQQRLGFVARAPRWAIAYKFPAQEQLTRVRDVEFQVGRTGAITPVARLEPVLVSGAMVSNATLHNADEVERLGLMIGDTVIVRRAGDVIPQIVGVVTSERPAEVRPVAFPTQCPVCSSDVERVEGEAVLRCTAGLVCAAQRKEALKHFVSRRAMDIDGMGDKIIDQLVERELVKTPADLFRLNKEILTRLDRMGSKSAQNLLEALEKARQTTFARFLYALGIREVGEATAVNLAAAYGTLDALIAADIDSLTGVQDIGNIVATHVRHFFEETHNIEVIQDLLSPAIGIRWPEPVAAPVAASDNPFAGKTIVLTGSLSSLSRDEAKDHLVALGARVSGSVSAKTDLLIAGEAAGSKLSKAQQLNIPVMDEAEMMRLLGESSDA.

Residues 32–36, 81–82, and E113 each bind NAD(+); these read DSEYD and SL. K115 serves as the catalytic N6-AMP-lysine intermediate. NAD(+) contacts are provided by R136, E174, K291, and K315. C409, C412, C427, and C433 together coordinate Zn(2+). The BRCT domain occupies 596-678; that stretch reads ASDNPFAGKT…MRLLGESSDA (83 aa).

This sequence belongs to the NAD-dependent DNA ligase family. LigA subfamily. Mg(2+) serves as cofactor. Requires Mn(2+) as cofactor.

It carries out the reaction NAD(+) + (deoxyribonucleotide)n-3'-hydroxyl + 5'-phospho-(deoxyribonucleotide)m = (deoxyribonucleotide)n+m + AMP + beta-nicotinamide D-nucleotide.. In terms of biological role, DNA ligase that catalyzes the formation of phosphodiester linkages between 5'-phosphoryl and 3'-hydroxyl groups in double-stranded DNA using NAD as a coenzyme and as the energy source for the reaction. It is essential for DNA replication and repair of damaged DNA. The polypeptide is DNA ligase (Sodalis glossinidius (strain morsitans)).